We begin with the raw amino-acid sequence, 62 residues long: U8-theraphotoxin-Cg1a 2 (62 aa).

A signal peptide spans 1 to 21 (MKTLVLFIIFGLAALFLLSSA). Residues 22-29 (TELEETER) constitute a propeptide that is removed on maturation. 3 disulfides stabilise this stretch: cysteine 31–cysteine 46, cysteine 38–cysteine 51, and cysteine 45–cysteine 58.

Belongs to the neurotoxin 10 (Hwtx-1) family. 30 (Jztx-14) subfamily. In terms of tissue distribution, expressed by the venom gland.

Its subcellular location is the secreted. Functionally, probable ion channel inhibitor. This chain is U8-theraphotoxin-Cg1a 2, found in Chilobrachys guangxiensis (Chinese earth tiger tarantula).